The following is a 1376-amino-acid chain: DNA-directed RNA polymerase subunit beta'' (1376 aa).

The Zn(2+) site is built by C221, C290, C297, and C300. A disordered region spans residues 895–919 (PSGSGFPSDNELDHSNRNPFSSSYP).

The protein belongs to the RNA polymerase beta' chain family. RpoC2 subfamily. In terms of assembly, in plastids the minimal PEP RNA polymerase catalytic core is composed of four subunits: alpha, beta, beta', and beta''. When a (nuclear-encoded) sigma factor is associated with the core the holoenzyme is formed, which can initiate transcription. The cofactor is Zn(2+).

It is found in the plastid. The protein localises to the chloroplast. The enzyme catalyses RNA(n) + a ribonucleoside 5'-triphosphate = RNA(n+1) + diphosphate. In terms of biological role, DNA-dependent RNA polymerase catalyzes the transcription of DNA into RNA using the four ribonucleoside triphosphates as substrates. This Pelargonium hortorum (Common geranium) protein is DNA-directed RNA polymerase subunit beta''.